The sequence spans 118 residues: T cell receptor gamma variable 2 (118 aa).

An N-terminal signal peptide occupies residues 1–17; it reads MQWALAVLLAFLSPASQ. Positions 18–118 constitute an Ig-like domain; sequence KSSNLEGRTK…GVYYCATWDG (101 aa). A disulfide bridge links cysteine 41 with cysteine 113.

Gamma-delta TR is a heterodimer composed of a gamma and delta chain; disulfide-linked. The gamma-delta TR is associated with the transmembrane signaling CD3 coreceptor proteins following the stoichiometry: a single gamma-delta TR heterodimer associates with one CD3D-CD3E heterodimer, one CD3G-CD3E heterodimer and one CD247 homodimer forming a stable octameric structure. Upon activation, gamma-delta TR complex associates with FCER1G to initiate intracellular signaling.

The protein resides in the cell membrane. Its function is as follows. V region of the variable domain of T cell receptor (TR) gamma chain that participates in the antigen recognition. Gamma-delta TRs recognize a variety of self and foreign non-peptide antigens frequently expressed at the epithelial boundaries between the host and external environment, including endogenous lipids presented by MH-like protein CD1D and phosphoantigens presented by butyrophilin-like molecule BTN3A1. Upon antigen recognition induces rapid, innate-like immune responses involved in pathogen clearance and tissue repair. Binding of gamma-delta TR complex to antigen triggers phosphorylation of immunoreceptor tyrosine-based activation motifs (ITAMs) in the CD3 chains by the LCK and FYN kinases, allowing the recruitment, phosphorylation, and activation of ZAP70 that facilitates phosphorylation of the scaffolding proteins LCP2 and LAT. This lead to the formation of a supramolecular signalosome that recruits the phospholipase PLCG1, resulting in calcium mobilization and ERK activation, ultimately leading to T cell expansion and differentiation into effector cells. Gamma-delta TRs are produced through somatic rearrangement of a limited repertoire of variable (V), diversity (D), and joining (J) genes. The potential diversity of gamma-delta TRs is conferred by the unique ability to rearrange (D) genes in tandem and to utilize all three reading frames. The combinatorial diversity is considerably increased by the sequence exonuclease trimming and random nucleotide (N) region additions which occur during the V-(D)-J rearrangements. This chain is T cell receptor gamma variable 2, found in Homo sapiens (Human).